We begin with the raw amino-acid sequence, 278 residues long: Orotidine 5'-phosphate decarboxylase (278 aa).

Substrate is bound by residues D40, 62–64 (KTH), 93–102 (DRKFADIGNT), Y223, and R242. K95 functions as the Proton donor in the catalytic mechanism.

Belongs to the OMP decarboxylase family.

The enzyme catalyses orotidine 5'-phosphate + H(+) = UMP + CO2. It functions in the pathway pyrimidine metabolism; UMP biosynthesis via de novo pathway; UMP from orotate: step 2/2. This chain is Orotidine 5'-phosphate decarboxylase (URA1), found in Schizophyllum commune (Split gill fungus).